Reading from the N-terminus, the 142-residue chain is Putative thiosulfate sulfurtransferase, mitochondrial (142 aa).

The transit peptide at 1–25 (MFSKTLSVSRLLMTRSFYSSTVVKN) directs the protein to the mitochondrion. The Rhodanese domain maps to 43-140 (GDKSTVLIDV…SWLEWSDKIK (98 aa)). Catalysis depends on C104, which acts as the Cysteine persulfide intermediate.

The protein localises to the mitochondrion. It catalyses the reaction thiosulfate + hydrogen cyanide = thiocyanate + sulfite + 2 H(+). Its function is as follows. Thiosulfate sulfurtransferase which catalyzes the transfer of sulfane sulfur from thiosulfate to cyanide. The protein is Putative thiosulfate sulfurtransferase, mitochondrial of Schizosaccharomyces pombe (strain 972 / ATCC 24843) (Fission yeast).